The chain runs to 311 residues: Metal-staphylopine import system permease protein CntB (311 aa).

6 helical membrane passes run 9 to 29 (IALM…LTYI), 105 to 125 (LTII…VVSA), 139 to 159 (VAFF…IIYV), 173 to 193 (GPES…GIYF), 237 to 257 (IFCM…YIFA), and 274 to 294 (FPVI…FNTL). The region spanning 99 to 295 (FMNTLKLTII…VLFIVFNTLA (197 aa)) is the ABC transmembrane type-1 domain.

Belongs to the binding-protein-dependent transport system permease family. In terms of assembly, the complex is composed of two ATP-binding proteins (CntD and CntF), two transmembrane proteins (CntB and CntC) and a solute-binding protein (CntA).

It is found in the cell membrane. Its activity is regulated as follows. Nickel/cobalt import is reduced in the presence of zinc. In terms of biological role, part of the ABC transporter complex CntABCDF (Opp1) involved in the uptake of metal in complex with the metallophore staphylopine (StP). Involved in the import of divalent metals ions such as nickel, cobalt and zinc. Probably responsible for the translocation of the substrate across the membrane. Plays a major role in nickel/cobalt import in zinc-depleted conditions. Contributes to virulence. Required for full urease activity in vitro. The sequence is that of Metal-staphylopine import system permease protein CntB from Staphylococcus aureus (strain NCTC 8325 / PS 47).